Consider the following 119-residue polypeptide: Large ribosomal subunit protein bL20 (119 aa).

Belongs to the bacterial ribosomal protein bL20 family.

Binds directly to 23S ribosomal RNA and is necessary for the in vitro assembly process of the 50S ribosomal subunit. It is not involved in the protein synthesizing functions of that subunit. The protein is Large ribosomal subunit protein bL20 of Stenotrophomonas maltophilia (strain K279a).